Consider the following 580-residue polypeptide: MESSAKRKMDPDNPDEGPSSKVPRPETPVTKATTFLQTMLRKEVNSQLSLGDPLFPELAEESLKTFEQVTEDCNENPEKDVLTELGDILAQAVNHAGIDSSSTGPTLTTHSCSVSSAPLNKPTPTSVAVTNTPLPGASATPELSPRKKPRKTTRPFKVIIKPPVPPAPIMLPLIKQEDIKPEPDFTIQYRNKIIDTAGCIVISDSEEEQGEEVETRGATASSPSTGSGTPRVTSPTHPLSQMNHPPLPDPLGRPDEDSSSSSSSSCSSASDSESESEEMKCSSGGGASVTSSHHGRGGFGGAASSSLLSCGHQSSGGASTGPRKKKSKRISELDNEKVRNIMKDKNTPFCTPNVQTRRGRVKIDEVSRMFRHTNRSLEYKNLPFMIPSMHQVLEEAIKVCKTMQVNNKGIQIIYTRNHEVKNEVDQVRCRLGSMCNLALSTPFLMEHTMPVTHPPDVAQRTADACNDGVKAVWNLKELHTHQLCPRSSDYRNMIIHAATPVDLLGALNLCLPLMQKFPKQVMVRIFSTNQGGFMLPIYETAAKAYAVGQFEKPTETPPEDLDTLSLAIEAAIQDLRNKSQ.

The segment covering 1-11 (MESSAKRKMDP) has biased composition (basic and acidic residues). Disordered stretches follow at residues 1-30 (MESS…TPVT) and 99-161 (DSSS…VIIK). A compositionally biased stretch (polar residues) spans 99 to 133 (DSSSTGPTLTTHSCSVSSAPLNKPTPTSVAVTNTP). Residues Lys175 and Lys180 each participate in a glycyl lysine isopeptide (Lys-Gly) (interchain with G-Cter in SUMO) cross-link. The SUMO-interacting motif 1/SIM1 motif lies at 199-202 (CIVI). Residues 200–208 (IVISDSEEE) are non-covalent SUMO1 binding region (SIM). Residues Ser203 and Ser205 each carry the phosphoserine modification. The disordered stretch occupies residues 206–336 (EEEQGEEVET…SKRISELDNE (131 aa)). Composition is skewed to low complexity over residues 216-236 (RGAT…TSPT), 259-271 (SSSS…SASD), and 302-317 (AASS…SSGG). The SUMO-interacting motif 1/SIM2 signature appears at 410–413 (IQII). An SUMO-interacting motif 1/SIM3 motif is present at residues 501 to 504 (VDLL).

It belongs to the HHV-5 IE2 protein family. Interacts with host SUMO-modified form of TATA-binding protein (TBP)-associated factor 12/TAF12 in a SIM-dependent manner; this interaction increases the transactivation activity of IE2. Interacts with host CHAF1A. Interacts with several components of the host transcriptional machinery including TBP, TF2B and CREB1. Interacts with host DNA replication licensing factor MCM3. Interacts with host PLSCR1; this interaction inhibits IE2 transactivating activity. Phosphorylated by host CK2 at Ser-203 and Ser-205; leading to enhanced SUMOylation. Post-translationally, SUMOylated; SUMOylation is enhanced when IE2 is phosphorylated by host CK2. The sumoylation is necessary for efficient replication of the virus and thus for the function of this viral transcription factor.

The protein resides in the host nucleus. Its function is as follows. Stimulates viral early and late gene expression and thus play a crucial role in the regulation of productive infection. Selectively drives host RNA Pol II transcription initiation at a subset of viral early-late and late promoters without substantially affecting Pol II transcription of expressed host genes. Mechanistically, forms a repressive complex at the major immediate-early promoter region involving direct association with host nucleosomes and TBP. Concerning activation, stimulates transcription by binding nearby, but not within, core promoter regions. In addition, activates quiescent cells to reenter the cell cycle and up-regulates several E2F-responsive genes, which are responsible for pushing the cell into S phase. In S-phase, inhibits cellular DNA synthesis and blocks further cell cycle progression. The sequence is that of Viral transcription factor IE2 (UL122) from Homo sapiens (Human).